The following is a 936-amino-acid chain: MTDYKDTLNLPQTDFPMRANLPEREPQTLARWQTLDLYRKIRKDREGQPKFILHDGPPYANGRAHLGTAFNKTLKDIVVKSKTLSGFDAPFVPGWDCHGLPIELNVEKKLGKDKLSANAFRQACRDYAFSQIELQRDDFQRLGVLGDWQHPYLTMDFGYEADTVRALAKIVANGHLLRGQKPVHWCAACGSALAEAEVEYRDKASPAVDVGFEAVDAEAVRQRFGVKNATTRVLVPIWTTTPWTLPANEAVSVHPELHYALVKSELQNQPVYLILAKDLVDSAMQRYGVDDYEVHGNLKGDALEGMQLQHPFLDRIVPIILGEHVTTEAGTGNVHTAPAHGLEDYFVAEKYNLPINNPVDARGRFIPDTFLVGGQPVFKANEPIIVLLADSGHLLHSETIQHSYPHCWRHKTPLIFRATPQWFIGMNKNGLRERALAEIEKVTWLPAWGEARIGKMVADRPDWCISRQRLWGIPIPLFIHKKSGELHPKSPALMEKVAQLIEKESVDAWFDLDPKVLLGDDADHYEKVTDVLDVWFDSGVTHFCVLEKRRELKVPADIYLEGSDQHRGWFQSSLLTSLAIRDKAPYKSVLTYGFVVDSQGRKMSKSLGNVILPADVVKNLGADVLRLWAASMDYTVEVNVSDEILKRASDAYRRIRNTARFLLSNLYDFDPKKDKVAVDQLVALDRWAIFTTQKLQEKIITAYDRYRFPAIYQAIHNFCTVEMGSFYLDIIKDRLYTSKESGLPRRSAQTALYYIAEAFVRWIAPIISFTADEIWQFMPGDREPSVFLTQWFSDFPNAALSGEEEQRWQLLLQIRDEVNKALETYRNEGKIGSALAAEVVLYADERLNAAIATLGEELRFVLITSEASVLPFNEKSKAAFDTALPGLALEINVSEFEKCARCWQRRSSVGQIKEHADLCDRCVSNAFEDGEMRQFA.

The short motif at 58–68 (PYANGRAHLGT) is the 'HIGH' region element. Position 561 (Glu561) interacts with L-isoleucyl-5'-AMP. The 'KMSKS' region signature appears at 602–606 (KMSKS). ATP is bound at residue Lys605. Cys899, Cys902, Cys919, and Cys922 together coordinate Zn(2+).

The protein belongs to the class-I aminoacyl-tRNA synthetase family. IleS type 1 subfamily. In terms of assembly, monomer. Zn(2+) serves as cofactor.

Its subcellular location is the cytoplasm. The catalysed reaction is tRNA(Ile) + L-isoleucine + ATP = L-isoleucyl-tRNA(Ile) + AMP + diphosphate. Catalyzes the attachment of isoleucine to tRNA(Ile). As IleRS can inadvertently accommodate and process structurally similar amino acids such as valine, to avoid such errors it has two additional distinct tRNA(Ile)-dependent editing activities. One activity is designated as 'pretransfer' editing and involves the hydrolysis of activated Val-AMP. The other activity is designated 'posttransfer' editing and involves deacylation of mischarged Val-tRNA(Ile). This is Isoleucine--tRNA ligase from Coxiella burnetii (strain CbuK_Q154) (Coxiella burnetii (strain Q154)).